Reading from the N-terminus, the 653-residue chain is MNKLRQSFRRKKDVYVPEASRPHQWQTDEEGVRTGKCSFPVKYLGHVEVDESRGMHICEDAVKRLKAERKFFKGFFGKTGKKAVKAVLWVSADGLRVVDEKTKDLIVDQTIEKVSFCAPDRNFDRAFSYICRDGTTRRWICHCFMAVKDTGERLSHAVGCAFAACLERKQKREKECGVTATFDASRTTFTREGSFRVTTATEQAEREEIMKQLQDAKKAETDKTVVGPSVAPGNTAPSPSSPTSPTPDGTASSEMNNPHAIPRRHAPIEQLARQGSFRGFPALSQKMSPFKRQLSLRINELPSTMQRKTDFPIKNTVPEVEGEAESISSLCSQITSAFSTPSEDPFSSAPMTKPVTLVAPQSPVLQANGTDSASHVLTAKPANTALAHVAMPVRETNPWAHVPDAANKEIAAIHPGTEWGQSSGAASPGLFQAGHRRTPSEADRWLEEVSKSVRAQQPQVSAAPLQPVLQPPPPAAIAPPAPPFQGHAFLTSQPVPVGVVPPLQPAFVPTQSYPVANGMPYPASNVPVVGITPSQMVANVFGTAGHPQTTHPHQSPSLAKQQTFPQYETSSATTSPFFKPPAQHLNGSAAFNGVDNGGLASGNRHAEVPPGTCPVDPFEAQWAALESKSKQRTNPSPTNPFSSDLQKTFEIEL.

One can recognise a PID domain in the interval 33 to 193 (RTGKCSFPVK…ASRTTFTREG (161 aa)). T102 carries the post-translational modification Phosphothreonine. Residue S194 is modified to Phosphoserine. Over residues 213–223 (LQDAKKAETDK) the composition is skewed to basic and acidic residues. Residues 213 to 260 (LQDAKKAETDKTVVGPSVAPGNTAPSPSSPTSPTPDGTASSEMNNPHA) form a disordered region. A Phosphothreonine modification is found at T243. At S244 the chain carries Phosphoserine. A phosphoserine; by CaMK1 mark is found at S276 and S295. The residue at position 427 (S427) is a Phosphoserine. At T438 the chain carries Phosphothreonine. At S440 the chain carries Phosphoserine. 2 disordered regions span residues 542 to 590 (GTAG…GSAA) and 625 to 653 (LESK…EIEL). 2 stretches are compositionally biased toward polar residues: residues 546–576 (HPQT…TTSP) and 632–646 (RTNP…SDLQ). S636 is subject to Phosphoserine.

In terms of assembly, interacts with SIAH1. Interacts with LNX. Interacts with CDH1. Interacts with TFAP2A and TFAP2B. Interacts with RALBP1 in a complex also containing EPN1 and TFAP2A during interphase and mitosis. Interacts with AAK1. May interact with DUOXA1. Post-translationally, phosphorylated on Ser-276 and Ser-295 by CaMK1. In terms of processing, ubiquitinated; mediated by SIAH1 and leading to its subsequent proteasomal degradation Isoform 1 and isoform 2 are ubiquitinated by LNX leading to their subsequent proteasomal degradation. Expressed in subventricular zone (SVZ) neuroprogenitors and ependymal cells.

The protein resides in the cell membrane. Its subcellular location is the endosome membrane. Functionally, regulates clathrin-mediated receptor endocytosis. Plays a role in the process of neurogenesis. Required throughout embryonic neurogenesis to maintain neural progenitor cells, also called radial glial cells (RGCs), by allowing their daughter cells to choose progenitor over neuronal cell fate. Not required for the proliferation of neural progenitor cells before the onset of neurogenesis. Also involved postnatally in the subventricular zone (SVZ) neurogenesis by regulating SVZ neuroblasts survival and ependymal wall integrity. May also mediate local repair of brain ventricular wall damage. The sequence is that of Protein numb homolog (Numb) from Mus musculus (Mouse).